The sequence spans 442 residues: Asparagine--tRNA ligase (442 aa).

The protein belongs to the class-II aminoacyl-tRNA synthetase family. In terms of assembly, homodimer.

Its subcellular location is the cytoplasm. It catalyses the reaction tRNA(Asn) + L-asparagine + ATP = L-asparaginyl-tRNA(Asn) + AMP + diphosphate + H(+). This is Asparagine--tRNA ligase from Koribacter versatilis (strain Ellin345).